Consider the following 296-residue polypeptide: 4-hydroxybenzoate octaprenyltransferase (296 aa).

9 helical membrane passes run 28–48 (PIGI…AGKG), 52–72 (LNTV…GCVI), 102–122 (ALVL…FTNS), 123–140 (TTIW…CYPF), 146–166 (YYPQ…AFTA), 169–189 (GELP…TVGY), 219–239 (VIIL…GSRF), 241–261 (LGAF…WEFW), and 275–295 (FLHN…DYAL).

It belongs to the UbiA prenyltransferase family. Mg(2+) serves as cofactor.

Its subcellular location is the cell inner membrane. The catalysed reaction is all-trans-octaprenyl diphosphate + 4-hydroxybenzoate = 4-hydroxy-3-(all-trans-octaprenyl)benzoate + diphosphate. The protein operates within cofactor biosynthesis; ubiquinone biosynthesis. Functionally, catalyzes the prenylation of para-hydroxybenzoate (PHB) with an all-trans polyprenyl group. Mediates the second step in the final reaction sequence of ubiquinone-8 (UQ-8) biosynthesis, which is the condensation of the polyisoprenoid side chain with PHB, generating the first membrane-bound Q intermediate 3-octaprenyl-4-hydroxybenzoate. The protein is 4-hydroxybenzoate octaprenyltransferase of Pseudomonas syringae pv. tomato (strain ATCC BAA-871 / DC3000).